We begin with the raw amino-acid sequence, 516 residues long: Probable cytosol aminopeptidase (516 aa).

Residues K288 and D293 each contribute to the Mn(2+) site. The active site involves K300. 3 residues coordinate Mn(2+): D311, D370, and E372. R374 is an active-site residue.

This sequence belongs to the peptidase M17 family. Requires Mn(2+) as cofactor.

It localises to the cytoplasm. The enzyme catalyses Release of an N-terminal amino acid, Xaa-|-Yaa-, in which Xaa is preferably Leu, but may be other amino acids including Pro although not Arg or Lys, and Yaa may be Pro. Amino acid amides and methyl esters are also readily hydrolyzed, but rates on arylamides are exceedingly low.. It catalyses the reaction Release of an N-terminal amino acid, preferentially leucine, but not glutamic or aspartic acids.. Its function is as follows. Presumably involved in the processing and regular turnover of intracellular proteins. Catalyzes the removal of unsubstituted N-terminal amino acids from various peptides. The chain is Probable cytosol aminopeptidase from Cupriavidus taiwanensis (strain DSM 17343 / BCRC 17206 / CCUG 44338 / CIP 107171 / LMG 19424 / R1) (Ralstonia taiwanensis (strain LMG 19424)).